We begin with the raw amino-acid sequence, 489 residues long: 3-octaprenyl-4-hydroxybenzoate carboxy-lyase (489 aa).

N172 provides a ligand contact to Mn(2+). Residues 175–177 (VYR), 189–191 (RWL), and 194–195 (RG) contribute to the prenylated FMN site. Residue E240 participates in Mn(2+) binding. D288 acts as the Proton donor in catalysis.

It belongs to the UbiD family. As to quaternary structure, homohexamer. It depends on prenylated FMN as a cofactor. Requires Mn(2+) as cofactor.

The protein localises to the cell membrane. The enzyme catalyses a 4-hydroxy-3-(all-trans-polyprenyl)benzoate + H(+) = a 2-(all-trans-polyprenyl)phenol + CO2. The protein operates within cofactor biosynthesis; ubiquinone biosynthesis. Functionally, catalyzes the decarboxylation of 3-octaprenyl-4-hydroxy benzoate to 2-octaprenylphenol, an intermediate step in ubiquinone biosynthesis. In Wigglesworthia glossinidia brevipalpis, this protein is 3-octaprenyl-4-hydroxybenzoate carboxy-lyase.